The primary structure comprises 208 residues: Thymidylate kinase (208 aa).

7–14 lines the ATP pocket; the sequence is GIDGSGKS.

Belongs to the thymidylate kinase family.

It catalyses the reaction dTMP + ATP = dTDP + ADP. Its function is as follows. Phosphorylation of dTMP to form dTDP in both de novo and salvage pathways of dTTP synthesis. In Kosmotoga olearia (strain ATCC BAA-1733 / DSM 21960 / TBF 19.5.1), this protein is Thymidylate kinase.